Here is a 249-residue protein sequence, read N- to C-terminus: MSNDSSECSQKLPKLKRILLKLSGESLSADQGFGINVESAQPIINQIKTLTNFGVELALVVGGGNILRGGRANFGNKIRRATADSMGMIATMINALALRDMLISEGVDAEVFSAKGVDGLLKVASAHEFNQELAKGRVLIFAGGTGNPFVTTDTTASLRAVEIGADALLKATTVNGVYDKDPNKYSDAKRFDKVTFSEVVSKELNVMDLGAFTQCRDFSIPIYVFDLTQPNALVDAVLDSKYGTWVTLD.

Position 21 to 24 (K21 to G24) interacts with ATP. G63 serves as a coordination point for UMP. ATP contacts are provided by G64 and R68. UMP-binding positions include D84 and T145–T152. Residues T172, Y178, and D181 each contribute to the ATP site.

Belongs to the UMP kinase family. As to quaternary structure, homohexamer.

It is found in the cytoplasm. The catalysed reaction is UMP + ATP = UDP + ADP. It functions in the pathway pyrimidine metabolism; CTP biosynthesis via de novo pathway; UDP from UMP (UMPK route): step 1/1. Its activity is regulated as follows. Inhibited by UTP. In terms of biological role, catalyzes the reversible phosphorylation of UMP to UDP. The protein is Uridylate kinase of Francisella tularensis subsp. holarctica (strain FTNF002-00 / FTA).